The sequence spans 63 residues: MRGTSFILFAVVVILGFLHGNAEPLANPEPSANPDPLANPDPLANPEAFDLLGLVKSVVSALG.

Residues 1–22 (MRGTSFILFAVVVILGFLHGNA) form the signal peptide. AXPX repeat units follow at residues 22–25 (AEPL), 26–29 (ANPE), 32–35 (ANPD), 38–41 (ANPD), and 44–47 (ANPE). The propeptide occupies 23-48 (EPLANPEPSANPDPLANPDPLANPEA). Leu-62 carries the leucine amide modification.

The protein belongs to the MCD family. Mastoparan subfamily. As to expression, expressed by the venom gland.

The protein localises to the secreted. The protein resides in the target cell membrane. Its function is as follows. Antimicrobial peptide with strong and moderate activity against the fungi B.cinerea (MIC=5 uM) and C.albicans (MIC=100 uM), the Gram-negative bacterium E.coli (MIC=200 uM) and the Gram-positive bacterium S.aureus (MIC=25 uM). Shows cytolytic activity against insect cell lines. Has potent hemolytic activity against human erythrocytes (EC(50)=64 uM). In vivo, peptide injection in the vicinity of the head and thorax of lepidopteran larvae induces feeding disorder followed by death due to starvation. This chain is Venom peptide 2b, found in Eumenes pomiformis (Potter wasp).